We begin with the raw amino-acid sequence, 632 residues long: 1-deoxy-D-xylulose-5-phosphate synthase (632 aa).

Residues H74 and 115-117 (AHS) each bind thiamine diphosphate. Residue D146 participates in Mg(2+) binding. Residues 147–148 (GA), N176, Y283, and E365 contribute to the thiamine diphosphate site. N176 is a binding site for Mg(2+).

Belongs to the transketolase family. DXPS subfamily. Homodimer. Mg(2+) is required as a cofactor. It depends on thiamine diphosphate as a cofactor.

It catalyses the reaction D-glyceraldehyde 3-phosphate + pyruvate + H(+) = 1-deoxy-D-xylulose 5-phosphate + CO2. The protein operates within metabolic intermediate biosynthesis; 1-deoxy-D-xylulose 5-phosphate biosynthesis; 1-deoxy-D-xylulose 5-phosphate from D-glyceraldehyde 3-phosphate and pyruvate: step 1/1. Functionally, catalyzes the acyloin condensation reaction between C atoms 2 and 3 of pyruvate and glyceraldehyde 3-phosphate to yield 1-deoxy-D-xylulose-5-phosphate (DXP). In Paraburkholderia phymatum (strain DSM 17167 / CIP 108236 / LMG 21445 / STM815) (Burkholderia phymatum), this protein is 1-deoxy-D-xylulose-5-phosphate synthase.